Here is a 246-residue protein sequence, read N- to C-terminus: Bis(5'-nucleosyl)-tetraphosphatase PrpE [asymmetrical] (246 aa).

Belongs to the PrpE family. The cofactor is Ni(2+).

The enzyme catalyses P(1),P(4)-bis(5'-guanosyl) tetraphosphate + H2O = GMP + GTP + 2 H(+). In terms of biological role, asymmetrically hydrolyzes Ap4p to yield AMP and ATP. This is Bis(5'-nucleosyl)-tetraphosphatase PrpE [asymmetrical] from Bacillus cereus (strain 03BB102).